Here is a 146-residue protein sequence, read N- to C-terminus: Snake venom vascular endothelial growth factor toxin (146 aa).

A signal peptide spans 1–24 (MAVYLLAVAILFCIQGWPLGTVQG). A Pyrrolidone carboxylic acid modification is found at Gln-25. Disulfide bonds link Cys-38–Cys-80, Cys-69–Cys-115, and Cys-73–Cys-117. A disordered region spans residues 118–146 (RPRSASGVNSRKHKRNPEEGEPRAKFPFV). Over residues 133–146 (NPEEGEPRAKFPFV) the composition is skewed to basic and acidic residues.

Belongs to the PDGF/VEGF growth factor family. Snake venom VEGF subfamily. Homodimer; disulfide-linked. Interacts with VEGF receptor-1 (FLT1) with a high affinity, whereas it binds to VEGF receptor-2 (KDR) with a low affinity. Does not bind VEGF receptor-3 (FLT4). As to expression, expressed by the venom gland.

It localises to the secreted. Snake venom VEGFs that may contribute to venom dispersion and prey subjugation by inducing vascular permeability and hypotension. This protein induces an increase in capillary permeability after intradermal injection, as well as a drastic hypotensive effect after intravenous injection. The hypotension is mediated by nitric oxide (NO), which is produced by VEGF-activated endothelium NO synthase. Also induces angiogenesis in vitro. Like other crotalid VEGFs, this protein interacts with VEGF receptor-1 (FLT1) with a high affinity, whereas it binds to VEGF receptor-2 (KDR) with a low affinity. This Bothrops jararaca (Jararaca) protein is Snake venom vascular endothelial growth factor toxin.